The chain runs to 245 residues: Myelin protein P0 (245 aa).

A signal peptide spans 1 to 28; the sequence is MEPSGLRTPCSLLALVLLSALVLTPTLA. Residues 29-143 form the Ig-like V-type domain; that stretch reads IEVYTDREVY…VGKSSYVHLQ (115 aa). Over 29–153 the chain is Extracellular; that stretch reads IEVYTDREVY…VQEKGPARAG (125 aa). Cysteines 49 and 125 form a disulfide. A glycan (N-linked (GlcNAc...) asparagine) is linked at N120. The chain crosses the membrane as a helical span at residues 154–174; the sequence is LILGIIIAVALALVIVVTILI. Over 175-245 the chain is Cytoplasmic; that stretch reads LLIRYCWLRR…GIGDSRKDRK (71 aa). Basic and acidic residues-rich tracts occupy residues 199–208 and 224–245; these read KLHKAKDSSK and TRGK…KDRK. The segment at 199–245 is disordered; that stretch reads KLHKAKDSSKRSSRQTPILYAMLDQTRGKSSEKKAKGGIGDSRKDRK.

The protein belongs to the myelin P0 protein family.

The protein localises to the cell membrane. In terms of biological role, creation of an extracellular membrane face which guides the wrapping process and ultimately compacts adjacent lamellae. This chain is Myelin protein P0 (mpz), found in Xenopus laevis (African clawed frog).